Consider the following 395-residue polypeptide: Acetate kinase (395 aa).

A Mg(2+)-binding site is contributed by Asn-8. ATP is bound at residue Lys-15. Residue Arg-89 coordinates substrate. Asp-146 (proton donor/acceptor) is an active-site residue. ATP-binding positions include 206–210 (HLGNG), 281–283 (DLR), and 329–333 (GIGEN). Glu-382 contacts Mg(2+).

This sequence belongs to the acetokinase family. In terms of assembly, homodimer. Requires Mg(2+) as cofactor. It depends on Mn(2+) as a cofactor.

Its subcellular location is the cytoplasm. The enzyme catalyses acetate + ATP = acetyl phosphate + ADP. It functions in the pathway metabolic intermediate biosynthesis; acetyl-CoA biosynthesis; acetyl-CoA from acetate: step 1/2. Functionally, catalyzes the formation of acetyl phosphate from acetate and ATP. Can also catalyze the reverse reaction. This is Acetate kinase from Bacillus velezensis (strain DSM 23117 / BGSC 10A6 / LMG 26770 / FZB42) (Bacillus amyloliquefaciens subsp. plantarum).